A 352-amino-acid chain; its full sequence is 4-hydroxy-2-oxovalerate aldolase (352 aa).

Positions 14–266 (VRMTDTSLRD…KTGIDFFDIA (253 aa)) constitute a Pyruvate carboxyltransferase domain. 22–23 (RD) contacts substrate. Residue aspartate 23 coordinates Mn(2+). Histidine 26 acts as the Proton acceptor in catalysis. Substrate is bound by residues serine 176 and histidine 205. Mn(2+)-binding residues include histidine 205 and histidine 207. A substrate-binding site is contributed by tyrosine 296.

The protein belongs to the 4-hydroxy-2-oxovalerate aldolase family.

It catalyses the reaction (S)-4-hydroxy-2-oxopentanoate = acetaldehyde + pyruvate. This is 4-hydroxy-2-oxovalerate aldolase from Mycolicibacterium gilvum (strain PYR-GCK) (Mycobacterium gilvum (strain PYR-GCK)).